A 338-amino-acid chain; its full sequence is RNA 3'-terminal phosphate cyclase (338 aa).

Residues Gln-103 and 283-287 contribute to the ATP site; that span reads YLADQ. The active-site Tele-AMP-histidine intermediate is His-308.

The protein belongs to the RNA 3'-terminal cyclase family. Type 1 subfamily.

Its subcellular location is the cytoplasm. It carries out the reaction a 3'-end 3'-phospho-ribonucleotide-RNA + ATP = a 3'-end 2',3'-cyclophospho-ribonucleotide-RNA + AMP + diphosphate. Catalyzes the conversion of 3'-phosphate to a 2',3'-cyclic phosphodiester at the end of RNA. The mechanism of action of the enzyme occurs in 3 steps: (A) adenylation of the enzyme by ATP; (B) transfer of adenylate to an RNA-N3'P to produce RNA-N3'PP5'A; (C) and attack of the adjacent 2'-hydroxyl on the 3'-phosphorus in the diester linkage to produce the cyclic end product. The biological role of this enzyme is unknown but it is likely to function in some aspects of cellular RNA processing. This is RNA 3'-terminal phosphate cyclase from Escherichia coli O17:K52:H18 (strain UMN026 / ExPEC).